Here is a 90-residue protein sequence, read N- to C-terminus: Phosphocarrier protein HPr (90 aa).

Residues 1 to 89 (MPALEITIIN…ELINNRFDEG (89 aa)) form the HPr domain. Histidine 15 serves as the catalytic Pros-phosphohistidine intermediate.

The protein belongs to the HPr family.

It is found in the cytoplasm. Functionally, general (non sugar-specific) component of the phosphoenolpyruvate-dependent sugar phosphotransferase system (sugar PTS). This major carbohydrate active-transport system catalyzes the phosphorylation of incoming sugar substrates concomitantly with their translocation across the cell membrane. The phosphoryl group from phosphoenolpyruvate (PEP) is transferred to the phosphoryl carrier protein HPr by enzyme I. Phospho-HPr then transfers it to the PTS EIIA domain. This Pseudomonas aeruginosa (strain ATCC 15692 / DSM 22644 / CIP 104116 / JCM 14847 / LMG 12228 / 1C / PRS 101 / PAO1) protein is Phosphocarrier protein HPr (ptsH).